Here is a 77-residue protein sequence, read N- to C-terminus: Integrin beta-2 (77 aa).

Cys36 and Cys43 are disulfide-bonded. N-linked (GlcNAc...) asparagine glycosylation occurs at Asn54.

It belongs to the integrin beta chain family. Dimer of an alpha and beta subunit.

It localises to the membrane. Integrins are a large family of cell surface glycoproteins that mediate cell to cell and cell to matrix adhesion. The protein is Integrin beta-2 (itgb2) of Xenopus laevis (African clawed frog).